Consider the following 126-residue polypeptide: Histone H2B type 1-L (126 aa).

Over residues 1–12 (MPELAKSAPAPK) the composition is skewed to low complexity. Residues 1–36 (MPELAKSAPAPKKGSKKAVTKAQKKDGKKRKRSRKE) form a disordered region. An N-acetylproline modification is found at P2. At E3 the chain carries ADP-ribosyl glutamic acid. Residue K6 is modified to N6-(2-hydroxyisobutyryl)lysine; alternate. Residue K6 is modified to N6-(beta-hydroxybutyryl)lysine; alternate. N6-acetyllysine; alternate is present on K6. Residue K6 is modified to N6-butyryllysine; alternate. Residue K6 is modified to N6-crotonyllysine; alternate. N6-lactoyllysine; alternate is present on K6. K6 is covalently cross-linked (Glycyl lysine isopeptide (Lys-Gly) (interchain with G-Cter in SUMO2); alternate). An ADP-ribosylserine modification is found at S7. K12 carries the N6-(beta-hydroxybutyryl)lysine; alternate modification. N6-acetyllysine; alternate is present on residues K12 and K13. N6-crotonyllysine; alternate occurs at positions 12 and 13. N6-lactoyllysine; alternate is present on K12. Residue K13 is modified to N6-(2-hydroxyisobutyryl)lysine; alternate. S15 is subject to Phosphoserine; by STK4/MST1. K16, K17, K21, and K24 each carry N6-acetyllysine; alternate. An N6-crotonyllysine; alternate mark is found at K16, K17, K21, and K24. 4 positions are modified to N6-lactoyllysine; alternate: K16, K17, K21, and K24. N6-(beta-hydroxybutyryl)lysine; alternate is present on residues K17 and K21. An N6-glutaryllysine; alternate modification is found at K17. 2 positions are modified to N6-(2-hydroxyisobutyryl)lysine; alternate: K21 and K24. K21 carries the N6-butyryllysine; alternate modification. Residue K21 forms a Glycyl lysine isopeptide (Lys-Gly) (interchain with G-Cter in SUMO2); alternate linkage. K25 is modified (N6-(2-hydroxyisobutyryl)lysine). The residue at position 35 (K35) is an N6-(2-hydroxyisobutyryl)lysine; alternate. At K35 the chain carries N6-(beta-hydroxybutyryl)lysine; alternate. K35 is subject to N6-crotonyllysine; alternate. Position 35 is an N6-glutaryllysine; alternate (K35). An N6-succinyllysine; alternate modification is found at K35. K35 participates in a covalent cross-link: Glycyl lysine isopeptide (Lys-Gly) (interchain with G-Cter in ubiquitin); alternate. E36 is subject to PolyADP-ribosyl glutamic acid. The residue at position 37 (S37) is a Phosphoserine; by AMPK. Residues K44, K47, and K58 each carry the N6-(2-hydroxyisobutyryl)lysine; alternate modification. K44 carries the N6-lactoyllysine; alternate modification. 2 positions are modified to N6-glutaryllysine; alternate: K44 and K47. Position 47 is an N6-methyllysine; alternate (K47). An N6,N6-dimethyllysine; alternate modification is found at K58. R80 carries the dimethylated arginine modification. At K86 the chain carries N6-(2-hydroxyisobutyryl)lysine; alternate. An N6-(beta-hydroxybutyryl)lysine; alternate modification is found at K86. At K86 the chain carries N6-acetyllysine; alternate. Position 86 is an N6-lactoyllysine; alternate (K86). The residue at position 86 (K86) is an N6,N6,N6-trimethyllysine; alternate. An omega-N-methylarginine mark is found at R87 and R93. At K109 the chain carries N6-(2-hydroxyisobutyryl)lysine; alternate. N6-lactoyllysine; alternate is present on K109. The residue at position 109 (K109) is an N6-glutaryllysine; alternate. K109 carries the N6-methyllysine; alternate modification. Residue S113 is glycosylated (O-linked (GlcNAc) serine). T116 carries the phosphothreonine modification. Residues K117 and K121 each carry the N6-(2-hydroxyisobutyryl)lysine; alternate modification. Residues K117 and K121 each carry the N6-(beta-hydroxybutyryl)lysine; alternate modification. An N6-lactoyllysine; alternate mark is found at K117 and K121. 2 positions are modified to N6-glutaryllysine; alternate: K117 and K121. N6-succinyllysine; alternate occurs at positions 117 and 121. An N6-malonyllysine; alternate modification is found at K117. K117 bears the N6-methylated lysine; alternate mark. K121 is covalently cross-linked (Glycyl lysine isopeptide (Lys-Gly) (interchain with G-Cter in ubiquitin); alternate).

It belongs to the histone H2B family. In terms of assembly, the nucleosome is a histone octamer containing two molecules each of H2A, H2B, H3 and H4 assembled in one H3-H4 heterotetramer and two H2A-H2B heterodimers. The octamer wraps approximately 147 bp of DNA. Monoubiquitination at Lys-35 (H2BK34Ub) by the MSL1/MSL2 dimer is required for histone H3 'Lys-4' (H3K4me) and 'Lys-79' (H3K79me) methylation and transcription activation at specific gene loci, such as HOXA9 and MEIS1 loci. Similarly, monoubiquitination at Lys-121 (H2BK120Ub) by the RNF20/40 complex gives a specific tag for epigenetic transcriptional activation and is also prerequisite for histone H3 'Lys-4' and 'Lys-79' methylation. It also functions cooperatively with the FACT dimer to stimulate elongation by RNA polymerase II. H2BK120Ub also acts as a regulator of mRNA splicing: deubiquitination by USP49 is required for efficient cotranscriptional splicing of a large set of exons. Post-translationally, phosphorylation at Ser-37 (H2BS36ph) by AMPK in response to stress promotes transcription. Phosphorylated on Ser-15 (H2BS14ph) by STK4/MST1 during apoptosis; which facilitates apoptotic chromatin condensation. Also phosphorylated on Ser-15 in response to DNA double strand breaks (DSBs), and in correlation with somatic hypermutation and immunoglobulin class-switch recombination. In terms of processing, glcNAcylation at Ser-113 promotes monoubiquitination of Lys-121. It fluctuates in response to extracellular glucose, and associates with transcribed genes. ADP-ribosylated by PARP1 or PARP2 on Ser-7 (H2BS6ADPr) in response to DNA damage. H2BS6ADPr promotes recruitment of CHD1L. Mono-ADP-ribosylated on Glu-3 (H2BE2ADPr) by PARP3 in response to single-strand breaks. Poly ADP-ribosylation on Glu-36 (H2BE35ADPr) by PARP1 regulates adipogenesis: it inhibits phosphorylation at Ser-37 (H2BS36ph), thereby blocking expression of pro-adipogenetic genes. Post-translationally, crotonylation (Kcr) is specifically present in male germ cells and marks testis-specific genes in post-meiotic cells, including X-linked genes that escape sex chromosome inactivation in haploid cells. Crotonylation marks active promoters and enhancers and confers resistance to transcriptional repressors. It is also associated with post-meiotically activated genes on autosomes. In terms of processing, lactylated in macrophages by EP300/P300 by using lactoyl-CoA directly derived from endogenous or exogenous lactate, leading to stimulates gene transcription.

The protein localises to the nucleus. Its subcellular location is the chromosome. Its function is as follows. Core component of nucleosome. Nucleosomes wrap and compact DNA into chromatin, limiting DNA accessibility to the cellular machineries which require DNA as a template. Histones thereby play a central role in transcription regulation, DNA repair, DNA replication and chromosomal stability. DNA accessibility is regulated via a complex set of post-translational modifications of histones, also called histone code, and nucleosome remodeling. The chain is Histone H2B type 1-L from Homo sapiens (Human).